We begin with the raw amino-acid sequence, 164 residues long: UPF0561 protein C2orf68 homolog (164 aa).

Composition is skewed to basic and acidic residues over residues methionine 1–lysine 13 and isoleucine 35–glutamate 49. Positions methionine 1–methionine 98 are disordered. A compositionally biased stretch (basic residues) spans lysine 50–arginine 64.

The protein belongs to the UPF0561 family.

This chain is UPF0561 protein C2orf68 homolog, found in Danio rerio (Zebrafish).